The primary structure comprises 398 residues: L-glutamine--4-(methylsulfanyl)-2-oxobutanoate aminotransferase (398 aa).

At K240 the chain carries N6-(pyridoxal phosphate)lysine.

Belongs to the class-I pyridoxal-phosphate-dependent aminotransferase family. MtnE subfamily. It depends on pyridoxal 5'-phosphate as a cofactor.

The catalysed reaction is 4-methylsulfanyl-2-oxobutanoate + L-glutamine = 2-oxoglutaramate + L-methionine. Its pathway is amino-acid biosynthesis; L-methionine biosynthesis via salvage pathway; L-methionine from S-methyl-5-thio-alpha-D-ribose 1-phosphate: step 6/6. Its function is as follows. Involved in the methylthioribose (MTR) recycling pathway. Catalyzes the formation of methionine from 2-keto-4-methylthiobutyrate (KMTB). This Bacillus subtilis (strain 168) protein is L-glutamine--4-(methylsulfanyl)-2-oxobutanoate aminotransferase.